Here is a 755-residue protein sequence, read N- to C-terminus: ABC transporter G family member 2 (755 aa).

Residues 98–358 (LSFTDLTYSV…FSEFKHPIPE (261 aa)) form the ABC transporter domain. Residue 151–158 (GASGSGKS) coordinates ATP. Residues 449-659 (IEMIVIGKRA…PYEGVLQNEF (211 aa)) form the ABC transmembrane type-2 domain. The next 6 membrane-spanning stretches (helical) occupy residues 468–488 (LLGMRLGAVMVTGIILATMFT), 503–523 (FFAFAMSTTFYTCAEAIPVFL), 552–572 (IPALIVLSASFAATTFWAVGL), 579–599 (FFFFYFTILASFWAGSSFVTF), 609–629 (LGFTVVVAILAYFLLFSGFFI), and 728–748 (LWITVAWGFFFRVLFYFTLLI).

This sequence belongs to the ABC transporter superfamily. ABCG family. Eye pigment precursor importer (TC 3.A.1.204) subfamily.

It localises to the membrane. This is ABC transporter G family member 2 (ABCG2) from Arabidopsis thaliana (Mouse-ear cress).